A 272-amino-acid polypeptide reads, in one-letter code: ATP phosphoribosyltransferase regulatory subunit (272 aa).

This sequence belongs to the class-II aminoacyl-tRNA synthetase family. HisZ subfamily. Heteromultimer composed of HisG and HisZ subunits.

The protein resides in the cytoplasm. It participates in amino-acid biosynthesis; L-histidine biosynthesis; L-histidine from 5-phospho-alpha-D-ribose 1-diphosphate: step 1/9. Its function is as follows. Required for the first step of histidine biosynthesis. May allow the feedback regulation of ATP phosphoribosyltransferase activity by histidine. The protein is ATP phosphoribosyltransferase regulatory subunit of Staphylococcus aureus (strain USA300).